We begin with the raw amino-acid sequence, 301 residues long: D-alanine--D-alanine ligase (301 aa).

The ATP-grasp domain maps to 102 to 295 (KAVFAAAGLP…FPALCAWMVE (194 aa)). ATP is bound at residue 128 to 181 (PLPRPYVIKPVNEGSSVGVFILREGDNRRADIARAWRHGSVAMTEEYVPGRELT). Residues D248, E262, and N264 each coordinate Mg(2+).

This sequence belongs to the D-alanine--D-alanine ligase family. It depends on Mg(2+) as a cofactor. The cofactor is Mn(2+).

The protein localises to the cytoplasm. It catalyses the reaction 2 D-alanine + ATP = D-alanyl-D-alanine + ADP + phosphate + H(+). The protein operates within cell wall biogenesis; peptidoglycan biosynthesis. Its function is as follows. Cell wall formation. The protein is D-alanine--D-alanine ligase of Acidiphilium cryptum (strain JF-5).